The chain runs to 95 residues: Cell division topological specificity factor (95 aa).

This sequence belongs to the MinE family.

Its function is as follows. Prevents the cell division inhibition by proteins MinC and MinD at internal division sites while permitting inhibition at polar sites. This ensures cell division at the proper site by restricting the formation of a division septum at the midpoint of the long axis of the cell. This is Cell division topological specificity factor from Methylorubrum extorquens (strain PA1) (Methylobacterium extorquens).